A 554-amino-acid polypeptide reads, in one-letter code: Dihydroxy-acid dehydratase (554 aa).

Asp-78 contributes to the Mg(2+) binding site. Cys-119 serves as a coordination point for [2Fe-2S] cluster. 2 residues coordinate Mg(2+): Asp-120 and Lys-121. Residue Lys-121 is modified to N6-carboxylysine. [2Fe-2S] cluster is bound at residue Cys-192. Residue Glu-443 coordinates Mg(2+). Ser-469 (proton acceptor) is an active-site residue.

It belongs to the IlvD/Edd family. Homodimer. The cofactor is [2Fe-2S] cluster. It depends on Mg(2+) as a cofactor.

The enzyme catalyses (2R)-2,3-dihydroxy-3-methylbutanoate = 3-methyl-2-oxobutanoate + H2O. It carries out the reaction (2R,3R)-2,3-dihydroxy-3-methylpentanoate = (S)-3-methyl-2-oxopentanoate + H2O. It participates in amino-acid biosynthesis; L-isoleucine biosynthesis; L-isoleucine from 2-oxobutanoate: step 3/4. It functions in the pathway amino-acid biosynthesis; L-valine biosynthesis; L-valine from pyruvate: step 3/4. Functionally, functions in the biosynthesis of branched-chain amino acids. Catalyzes the dehydration of (2R,3R)-2,3-dihydroxy-3-methylpentanoate (2,3-dihydroxy-3-methylvalerate) into 2-oxo-3-methylpentanoate (2-oxo-3-methylvalerate) and of (2R)-2,3-dihydroxy-3-methylbutanoate (2,3-dihydroxyisovalerate) into 2-oxo-3-methylbutanoate (2-oxoisovalerate), the penultimate precursor to L-isoleucine and L-valine, respectively. This Clostridium novyi (strain NT) protein is Dihydroxy-acid dehydratase.